A 97-amino-acid polypeptide reads, in one-letter code: Large ribosomal subunit protein uL23 (97 aa).

It belongs to the universal ribosomal protein uL23 family. In terms of assembly, part of the 50S ribosomal subunit. Contacts protein L29, and trigger factor when it is bound to the ribosome.

In terms of biological role, one of the early assembly proteins it binds 23S rRNA. One of the proteins that surrounds the polypeptide exit tunnel on the outside of the ribosome. Forms the main docking site for trigger factor binding to the ribosome. The polypeptide is Large ribosomal subunit protein uL23 (Chelativorans sp. (strain BNC1)).